We begin with the raw amino-acid sequence, 596 residues long: Nuclear receptor subfamily 2 group C member 2 (596 aa).

Serine 19 is modified (phosphoserine; by MAPK). Serine 46 carries the phosphoserine modification. Phosphoserine; by MAPK occurs at positions 55 and 68. Position 98 is a phosphoserine (serine 98). The segment at residues valine 114–serine 189 is a DNA-binding region (nuclear receptor). NR C4-type zinc fingers lie at residues cysteine 117–cysteine 137 and cysteine 153–cysteine 177. Residue lysine 192 forms a Glycyl lysine isopeptide (Lys-Gly) (interchain with G-Cter in SUMO2) linkage. Serine 219 is subject to Phosphoserine. The residue at position 231 (lysine 231) is an N6-acetyllysine. Residues glycine 341–glutamate 583 enclose the NR LBD domain.

It belongs to the nuclear hormone receptor family. NR2 subfamily. As to quaternary structure, homodimer; can bind DNA as homodimer. Heterodimer; binds DNA as a heterodimer with NR2C1 required for chromatin remodeling and for binding to promoter regions such as globin DR1 repeats. Interacts with PCAF; the interaction preferentially occurs on the non-phosphorylated form and induces NR2C2-mediated transactivation activity and does not require the ligand-binding domain. Interacts (MAPK-mediated phosphorylated form) with NRIP1; the interaction promotes repression of NR2C2-mediated activity. Interacts with NR2C2AP; the interaction represses selective NR2C2-mediated transcriptional activity. Interacts with NLRP10. Interacts (via ligand-binding region) with transcriptional corepressor JAZF1; the interaction promotes NR2C2-mediated transcriptional repression. In terms of processing, phosphorylation on Ser-19 and Ser-68 is an important regulator of NR2C2-mediated transcriptional activity. Phosphorylation on these residues recruits the corepressor, NRIP1, leading to transcripional repression, whereas the non-phosphorylated form preferentially recruits the coactivator, PCAF.

It is found in the nucleus. In terms of biological role, orphan nuclear receptor that can act as a repressor or activator of transcription. An important repressor of nuclear receptor signaling pathways such as retinoic acid receptor, retinoid X, vitamin D3 receptor, thyroid hormone receptor and estrogen receptor pathways. May regulate gene expression during the late phase of spermatogenesis. Together with NR2C1, forms the core of the DRED (direct repeat erythroid-definitive) complex that represses embryonic and fetal globin transcription including that of GATA1. Binds to hormone response elements (HREs) consisting of two 5'-AGGTCA-3' half site direct repeat consensus sequences. Plays a fundamental role in early embryonic development and embryonic stem cells. Required for normal spermatogenesis and cerebellum development. Appears to be important for neurodevelopmentally regulated behavior. Activates transcriptional activity of LHCG. Antagonist of PPARA-mediated transactivation. The protein is Nuclear receptor subfamily 2 group C member 2 (NR2C2) of Homo sapiens (Human).